The primary structure comprises 401 residues: Probable tRNA sulfurtransferase (401 aa).

The region spanning Glu60–Asp165 is the THUMP domain. ATP contacts are provided by residues Met183–Leu184, His208–Phe209, Arg265, Gly287, and Gln296.

It belongs to the ThiI family.

The protein localises to the cytoplasm. The catalysed reaction is [ThiI sulfur-carrier protein]-S-sulfanyl-L-cysteine + a uridine in tRNA + 2 reduced [2Fe-2S]-[ferredoxin] + ATP + H(+) = [ThiI sulfur-carrier protein]-L-cysteine + a 4-thiouridine in tRNA + 2 oxidized [2Fe-2S]-[ferredoxin] + AMP + diphosphate. It carries out the reaction [ThiS sulfur-carrier protein]-C-terminal Gly-Gly-AMP + S-sulfanyl-L-cysteinyl-[cysteine desulfurase] + AH2 = [ThiS sulfur-carrier protein]-C-terminal-Gly-aminoethanethioate + L-cysteinyl-[cysteine desulfurase] + A + AMP + 2 H(+). The protein operates within cofactor biosynthesis; thiamine diphosphate biosynthesis. Its function is as follows. Catalyzes the ATP-dependent transfer of a sulfur to tRNA to produce 4-thiouridine in position 8 of tRNAs, which functions as a near-UV photosensor. Also catalyzes the transfer of sulfur to the sulfur carrier protein ThiS, forming ThiS-thiocarboxylate. This is a step in the synthesis of thiazole, in the thiamine biosynthesis pathway. The sulfur is donated as persulfide by IscS. This is Probable tRNA sulfurtransferase from Geobacillus kaustophilus (strain HTA426).